Here is a 1195-residue protein sequence, read N- to C-terminus: Zinc finger and BTB domain-containing protein 38 (1195 aa).

The 68-residue stretch at 33-100 (CDVTIIVEDT…IYSSTVVVKR (68 aa)) folds into the BTB domain. A Glycyl lysine isopeptide (Lys-Gly) (interchain with G-Cter in SUMO2) cross-link involves residue lysine 43. At serine 130 the chain carries Phosphoserine. Residues lysine 145, lysine 148, lysine 151, and lysine 259 each participate in a glycyl lysine isopeptide (Lys-Gly) (interchain with G-Cter in SUMO2) cross-link. Residues 264 to 334 (RKPKTFSIPQ…QSSDVPGPPA (71 aa)) form a disordered region. Polar residues predominate over residues 270–280 (SIPQDSDSATE). The interval 300–523 (PAAVLTRSKS…RRYQCIFCLE (224 aa)) is interaction with CBFA2T3. Serine 309 carries the phosphoserine modification. The segment covering 314–323 (GDVHFSREDE) has biased composition (basic and acidic residues). The segment at 342–364 (YNCSCCSKAFDSSTLLSAHMQLH) adopts a C2H2-type 1 zinc-finger fold. The C2H2-type 2; degenerate zinc-finger motif lies at 371-395 (LVCKYCNKQFTTLNRLDRHEQICMR). 3 C2H2-type zinc fingers span residues 460–482 (YSCV…ANVH), 488–510 (YPCH…EIWH), and 516–539 (YQCI…KSFH). Glycyl lysine isopeptide (Lys-Gly) (interchain with G-Cter in SUMO2) cross-links involve residues lysine 550, lysine 557, lysine 754, lysine 758, lysine 763, lysine 804, lysine 814, lysine 821, lysine 842, lysine 850, and lysine 857. The tract at residues 745 to 804 (SDPAVSQSLKDDSKPEPDKVGRFASRPKSIKEKKKTTSHTRGEIPEESNYVADPGGSLSK) is disordered. Positions 753-765 (LKDDSKPEPDKVG) are enriched in basic and acidic residues. Disordered regions lie at residues 871–891 (QEEP…PLGL) and 903–922 (FDDA…YYNY). Residues lysine 923, lysine 964, lysine 969, lysine 977, lysine 981, lysine 991, lysine 1017, and lysine 1026 each participate in a glycyl lysine isopeptide (Lys-Gly) (interchain with G-Cter in SUMO2) cross-link. C2H2-type zinc fingers lie at residues 1010–1032 (YACE…MRCH), 1038–1060 (YQCK…ERIH), 1066–1088 (FVCQ…ERIH), 1094–1116 (YHCQ…EQRH), and 1125–1147 (YACF…QKKH). Residues lysine 1109, lysine 1132, lysine 1135, lysine 1150, and lysine 1183 each participate in a glycyl lysine isopeptide (Lys-Gly) (interchain with G-Cter in SUMO2) cross-link.

As to quaternary structure, interacts with CBFA2T3. Interacts with ZBTB4. Interacts with RBBP6. Ubiquitinated by RBBP6; leading to its degradation by the proteasome.

It localises to the nucleus. It is found in the chromosome. In terms of biological role, transcriptional regulator with bimodal DNA-binding specificity. Binds with a higher affinity to methylated CpG dinucleotides in the consensus sequence 5'-CGCG-3' but can also bind to E-box elements (5'-CACGTG-3'). Can also bind specifically to a single methyl-CpG pair. Represses transcription in a methyl-CpG-dependent manner. Plays an important role in regulating DNA replication and common fragile sites (CFS) stability in a RBBP6- and MCM10-dependent manner; represses expression of MCM10 which plays an important role in DNA-replication. Acts as a transcriptional activator. May be involved in the differentiation and/or survival of late postmitotic neurons. The sequence is that of Zinc finger and BTB domain-containing protein 38 from Homo sapiens (Human).